Consider the following 191-residue polypeptide: Holliday junction branch migration complex subunit RuvA (191 aa).

Positions Met-1 to Ala-64 are domain I. Positions Thr-65–His-140 are domain II. Residues His-140–Pro-142 form a flexible linker region. The segment at Ala-143–Lys-191 is domain III.

It belongs to the RuvA family. Homotetramer. Forms an RuvA(8)-RuvB(12)-Holliday junction (HJ) complex. HJ DNA is sandwiched between 2 RuvA tetramers; dsDNA enters through RuvA and exits via RuvB. An RuvB hexamer assembles on each DNA strand where it exits the tetramer. Each RuvB hexamer is contacted by two RuvA subunits (via domain III) on 2 adjacent RuvB subunits; this complex drives branch migration. In the full resolvosome a probable DNA-RuvA(4)-RuvB(12)-RuvC(2) complex forms which resolves the HJ.

Its subcellular location is the cytoplasm. Functionally, the RuvA-RuvB-RuvC complex processes Holliday junction (HJ) DNA during genetic recombination and DNA repair, while the RuvA-RuvB complex plays an important role in the rescue of blocked DNA replication forks via replication fork reversal (RFR). RuvA specifically binds to HJ cruciform DNA, conferring on it an open structure. The RuvB hexamer acts as an ATP-dependent pump, pulling dsDNA into and through the RuvAB complex. HJ branch migration allows RuvC to scan DNA until it finds its consensus sequence, where it cleaves and resolves the cruciform DNA. This Verminephrobacter eiseniae (strain EF01-2) protein is Holliday junction branch migration complex subunit RuvA.